The primary structure comprises 369 residues: NADH-quinone oxidoreductase subunit H (369 aa).

8 consecutive transmembrane segments (helical) span residues 20 to 40, 88 to 108, 133 to 153, 179 to 199, 205 to 225, 267 to 287, 293 to 313, and 328 to 348; these read VLLIKIMAVIISVMVSVAYLV, ICFLIAPIITFTLALLGWAVI, IGVLYILAISSLGVYGIIIAG, IGLTIVTVLLATGSLKLGEIV, MPYWIDLLLLPMACVFFISSL, ILINAMAVIFFFGGWYPPLNI, IPGIIWFVLKIIVLLFCFIWI, and LGWKVFLPISLLWVVLVSGVL.

This sequence belongs to the complex I subunit 1 family. As to quaternary structure, NDH-1 is composed of 14 different subunits. Subunits NuoA, H, J, K, L, M, N constitute the membrane sector of the complex.

Its subcellular location is the cell inner membrane. The catalysed reaction is a quinone + NADH + 5 H(+)(in) = a quinol + NAD(+) + 4 H(+)(out). NDH-1 shuttles electrons from NADH, via FMN and iron-sulfur (Fe-S) centers, to quinones in the respiratory chain. The immediate electron acceptor for the enzyme in this species is believed to be ubiquinone. Couples the redox reaction to proton translocation (for every two electrons transferred, four hydrogen ions are translocated across the cytoplasmic membrane), and thus conserves the redox energy in a proton gradient. This subunit may bind ubiquinone. The chain is NADH-quinone oxidoreductase subunit H from Ehrlichia canis (strain Jake).